Consider the following 536-residue polypeptide: CTP synthase (536 aa).

The segment at 1–268 is amidoligase domain; that stretch reads MSTKYVFVTG…DNLVCEKLHL (268 aa). CTP is bound at residue serine 14. Serine 14 is a UTP binding site. Residue 15-20 participates in ATP binding; that stretch reads ALGKGI. L-glutamine is bound at residue tyrosine 55. Position 72 (aspartate 72) interacts with ATP. Residues aspartate 72 and glutamate 142 each coordinate Mg(2+). Residues 149-151, 189-194, and lysine 225 contribute to the CTP site; these read DIE and KTKPTQ. Residues 189–194 and lysine 225 contribute to the UTP site; that span reads KTKPTQ. Positions 293-535 constitute a Glutamine amidotransferase type-1 domain; it reads KIALVGKYVE…IKAALEENKS (243 aa). Glycine 355 is a binding site for L-glutamine. Cysteine 382 serves as the catalytic Nucleophile; for glutamine hydrolysis. L-glutamine-binding positions include 383–386, glutamate 406, and arginine 463; that span reads LGMQ. Catalysis depends on residues histidine 508 and glutamate 510.

The protein belongs to the CTP synthase family. Homotetramer.

The enzyme catalyses UTP + L-glutamine + ATP + H2O = CTP + L-glutamate + ADP + phosphate + 2 H(+). It catalyses the reaction L-glutamine + H2O = L-glutamate + NH4(+). It carries out the reaction UTP + NH4(+) + ATP = CTP + ADP + phosphate + 2 H(+). It functions in the pathway pyrimidine metabolism; CTP biosynthesis via de novo pathway; CTP from UDP: step 2/2. Its activity is regulated as follows. Allosterically activated by GTP, when glutamine is the substrate; GTP has no effect on the reaction when ammonia is the substrate. The allosteric effector GTP functions by stabilizing the protein conformation that binds the tetrahedral intermediate(s) formed during glutamine hydrolysis. Inhibited by the product CTP, via allosteric rather than competitive inhibition. Functionally, catalyzes the ATP-dependent amination of UTP to CTP with either L-glutamine or ammonia as the source of nitrogen. Regulates intracellular CTP levels through interactions with the four ribonucleotide triphosphates. The protein is CTP synthase of Clostridium beijerinckii (strain ATCC 51743 / NCIMB 8052) (Clostridium acetobutylicum).